Reading from the N-terminus, the 1414-residue chain is DNA-directed RNA polymerase subunit beta' (1414 aa).

Zn(2+) is bound by residues C70, C72, C85, and C88. Mg(2+) contacts are provided by D460, D462, and D464. Zn(2+) contacts are provided by C814, C888, C895, and C898. Residues 1378 to 1414 are disordered; it reads EREAARQLANPFEDAPVTVGGEPEAPAADTPSDDSAE.

This sequence belongs to the RNA polymerase beta' chain family. In terms of assembly, the RNAP catalytic core consists of 2 alpha, 1 beta, 1 beta' and 1 omega subunit. When a sigma factor is associated with the core the holoenzyme is formed, which can initiate transcription. The cofactor is Mg(2+). Zn(2+) serves as cofactor.

It carries out the reaction RNA(n) + a ribonucleoside 5'-triphosphate = RNA(n+1) + diphosphate. Functionally, DNA-dependent RNA polymerase catalyzes the transcription of DNA into RNA using the four ribonucleoside triphosphates as substrates. This chain is DNA-directed RNA polymerase subunit beta', found in Bordetella bronchiseptica (strain ATCC BAA-588 / NCTC 13252 / RB50) (Alcaligenes bronchisepticus).